The primary structure comprises 62 residues: Metallothionein-4 (62 aa).

Positions 6, 8, 14, 16, 20, 22, 25, 27, 30, 34, 35, 37, 38, 42, 45, 49, 51, 58, 60, and 61 each coordinate a divalent metal cation.

This sequence belongs to the metallothionein superfamily. Type 1 family. As to expression, expressed exclusively in stratified squamous epithelia associated with oral epithelia, esophagus, upper stomach, tail, footpads and neonatal skin.

Seems to bind zinc and copper. Could play a special role in regulating zinc metabolism during the differentiation of stratified epithelia. This is Metallothionein-4 (Mt4) from Mus musculus (Mouse).